A 501-amino-acid chain; its full sequence is Zinc finger protein PLAG1 (501 aa).

The segment at 1–30 is disordered; the sequence is MATVIPGDLSEVRDTQKVPSGKRKRGETKP. Residues 22–25 carry the Nuclear localization signal motif; it reads KRKR. 7 C2H2-type zinc fingers span residues 34–56, 62–86, 92–114, 121–143, 150–172, 185–207, and 213–236; these read FPCQLCDKAFNSVEKLKVHSYSH, YKCTQQDCTKAFVSKYKLLRHMATH, HKCNYCEKMFHRKDHLKNHLHTH, FKCEECGKNYNTKLGFKRHLALH, LTCKVCLQTFESTGVLLEHLKTH, HQCEHCDRRFYTRKDVRRHMVVH, and FLCQYCAQRFGRKDHLTRHMKKSH. 2 stretches are compositionally biased toward low complexity: residues 366–380 and 455–467; these read SGMPSSSQDSQASSS and TQLPPQTQDPQDP. Disordered stretches follow at residues 366-406 and 447-474; these read SGMP…GSVP and QEEAHSSMTQLPPQTQDPQDPSNSIGLG.

It belongs to the krueppel C2H2-type zinc-finger protein family. As to expression, expressed in nephroblastoma.

The protein localises to the nucleus. Its function is as follows. Transcription factor and proto-oncogene whose activation results in up-regulation of target genes, such as IGFII, leading to uncontrolled cell proliferation. In Gallus gallus (Chicken), this protein is Zinc finger protein PLAG1 (PLAG1).